Reading from the N-terminus, the 726-residue chain is Dipeptidyl-peptidase 5 (726 aa).

A signal peptide spans 1–19 (MAAAKWLIASLAFASSGLA). Residues Asn-96 and Asn-252 are each glycosylated (N-linked (GlcNAc...) asparagine). The interval 269–291 (AEPINKRNGPRTPQGIEGASSSP) is disordered. Residue Ser-558 is the Charge relay system of the active site. Asn-605 carries N-linked (GlcNAc...) asparagine glycosylation. Catalysis depends on charge relay system residues Asp-641 and His-673. Asn-699 is a glycosylation site (N-linked (GlcNAc...) asparagine).

This sequence belongs to the peptidase S9C family.

The protein localises to the secreted. Extracellular dipeptidyl-peptidase which removes N-terminal dipeptides sequentially from polypeptides having unsubstituted N-termini. Contributes to pathogenicity. The chain is Dipeptidyl-peptidase 5 (DPP5) from Trichophyton tonsurans (Scalp ringworm fungus).